A 794-amino-acid polypeptide reads, in one-letter code: Protein smoothened (794 aa).

The N-terminal stretch at 1 to 15 (GPCWLWALALGLALG) is a signal peptide. Over 16–201 (PRRCPAAPLN…FTETEHREMH (186 aa)) the chain is Extracellular. An N-linked (GlcNAc...) asparagine glycan is attached at Asn25. Cystine bridges form between Cys34-Cys148, Cys40-Cys104, Cys48-Cys97, Cys88-Cys124, and Cys117-Cys139. An FZ domain is found at 35–151 (RRPAACERLR…DRFPEGCPNE (117 aa)). Cholesterol is bound at residue Asp65. Asn158 carries N-linked (GlcNAc...) asparagine glycosylation. 2 disulfides stabilise this stretch: Cys163–Cys183 and Cys187–Cys264. Residues 202–222 (VYIAFSSVTISCTFFTLATFV) form a helical membrane-spanning segment. Residues 223-231 (ADWRNSNRY) are Cytoplasmic-facing. The chain crosses the membrane as a helical span at residues 232 to 252 (PAVILFYVNACFFVGSIGCVA). The Extracellular segment spans residues 253–283 (QFMDGARDEIVCRADGTMRLGEPTSNETLSC). N-linked (GlcNAc...) asparagine glycosylation is present at Asn278. The cysteines at positions 283 and 359 are disulfide-linked. Residues 284–304 (VIIFVIVYYSLMSGVIWFVML) traverse the membrane as a helical segment. Residues 305–327 (TYAWHTSFKALGTTYQPLLGKTS) are Cytoplasmic-facing. Residues 328 to 348 (YFHLITWSIPFVLTVAILAVA) form a helical membrane-spanning segment. At 349–371 (QVDGDSVSGICFVGYKNYRYRAG) the chain is on the extracellular side. Tyr363 serves as a coordination point for cholesterol. The chain crosses the membrane as a helical span at residues 372–392 (FVLAPIGLVLIVGGYFLIRGV). The Cytoplasmic segment spans residues 393 to 420 (MTLFSIKSNHPGLLSEKAASKINETMLR). The chain crosses the membrane as a helical span at residues 421 to 440 (LGIFGFLAFGFVFITFGCHF). Topologically, residues 441–493 (YDFFNQAEWERSFREYVLCEANVTIATQTNKPIPECEIKNRPSLLVEKINLFA) are extracellular. The cysteines at positions 459 and 476 are disulfide-linked. Asn462 carries N-linked (GlcNAc...) asparagine glycosylation. Residues 494 to 514 (MFGTGISMSTWVWTKATLLIW) traverse the membrane as a helical segment. Residues 515-794 (KRTWCRLTGQ…AELLDADLDF (280 aa)) lie on the Cytoplasmic side of the membrane. Disordered stretches follow at residues 634 to 655 (LQKRSRKKKRRKKKKEEVCPER) and 723 to 773 (PFCP…RAGL). A compositionally biased stretch (basic residues) spans 637–647 (RSRKKKRRKKK).

It belongs to the G-protein coupled receptor Fz/Smo family. Homodimer.

The protein resides in the cell membrane. The protein localises to the cell projection. It localises to the cilium. Functionally, g protein-coupled receptor which associates with the patched protein (PTCH) to transduce hedgehog protein signaling. Binding of sonic hedgehog (SHH) to its receptor patched prevents inhibition of smoothened (SMO) by patched. When active, SMO binds to and sequesters protein kinase A catalytic subunit PRKACA at the cell membrane, preventing PRKACA-mediated phosphorylation of GLI transcription factors which releases the GLI proteins from PRKACA-mediated inhibition and allows for transcriptional activation of hedgehog pathway target genes. The polypeptide is Protein smoothened (SMO) (Gallus gallus (Chicken)).